We begin with the raw amino-acid sequence, 369 residues long: MPSAIVAAEQYREIFLNQHPMMDVRAPIEFTRGAFPNSTNLPLMLDSEREKVGTCYKQFGQQAAIALGHSLVNGPIKQQRIEAWASYVKANPNAYLYCFRGGLRSQLTQQWLKEAGIEVPYIQGGYKAMRQYLIGVIEAAPTQQPLLSLSGMTGCGKTDFLLQRKEAVDLEGIANHRGSSFGKNIDPQPTQINFENQLAIALLRHQQDNHSCLLLEDESFLIGRSALPQSFYSAMQAAEILVLEEPDDTRLKRLRNEYVHKMYSGFCERLGLEAGFAAFSEYLLQSLMSIRKRLGGKQHQELQDLMQQALNQQISQNDTSLHLVWIHLLLHKYYDPMYQYQLQKKSERVLFKGSHQAMHEWLNNFKSTQ.

A Rhodanese domain is found at 15–138 (FLNQHPMMDV…MRQYLIGVIE (124 aa)). Catalysis depends on C98, which acts as the S-selanylcysteine intermediate.

This sequence belongs to the SelU family. As to quaternary structure, monomer.

The catalysed reaction is 5-methylaminomethyl-2-thiouridine(34) in tRNA + selenophosphate + (2E)-geranyl diphosphate + H2O + H(+) = 5-methylaminomethyl-2-selenouridine(34) in tRNA + (2E)-thiogeraniol + phosphate + diphosphate. It catalyses the reaction 5-methylaminomethyl-2-thiouridine(34) in tRNA + (2E)-geranyl diphosphate = 5-methylaminomethyl-S-(2E)-geranyl-thiouridine(34) in tRNA + diphosphate. The enzyme catalyses 5-methylaminomethyl-S-(2E)-geranyl-thiouridine(34) in tRNA + selenophosphate + H(+) = 5-methylaminomethyl-2-(Se-phospho)selenouridine(34) in tRNA + (2E)-thiogeraniol. It carries out the reaction 5-methylaminomethyl-2-(Se-phospho)selenouridine(34) in tRNA + H2O = 5-methylaminomethyl-2-selenouridine(34) in tRNA + phosphate. In terms of biological role, involved in the post-transcriptional modification of the uridine at the wobble position (U34) of tRNA(Lys), tRNA(Glu) and tRNA(Gln). Catalyzes the conversion of 2-thiouridine (S2U-RNA) to 2-selenouridine (Se2U-RNA). Acts in a two-step process involving geranylation of 2-thiouridine (S2U) to S-geranyl-2-thiouridine (geS2U) and subsequent selenation of the latter derivative to 2-selenouridine (Se2U) in the tRNA chain. The chain is tRNA 2-selenouridine synthase from Shewanella sp. (strain W3-18-1).